Consider the following 101-residue polypeptide: Early E3A 11.6 kDa glycoprotein (101 aa).

Asn14 carries an N-linked (GlcNAc...) asparagine; by host glycan. Residues 41–62 (MWWFSIALMFVCLIIMWLICCL) form a helical membrane-spanning segment.

Belongs to the adenoviridae E3A-1 family. Post-translationally, N-glycosylated and probably also O-glycosylated.

The protein resides in the host nucleus membrane. The sequence is that of Early E3A 11.6 kDa glycoprotein from Human adenovirus C serotype 6 (HAdV-6).